The chain runs to 581 residues: Proline--tRNA ligase (581 aa).

This sequence belongs to the class-II aminoacyl-tRNA synthetase family. ProS type 1 subfamily. In terms of assembly, homodimer.

The protein resides in the cytoplasm. The catalysed reaction is tRNA(Pro) + L-proline + ATP = L-prolyl-tRNA(Pro) + AMP + diphosphate. In terms of biological role, catalyzes the attachment of proline to tRNA(Pro) in a two-step reaction: proline is first activated by ATP to form Pro-AMP and then transferred to the acceptor end of tRNA(Pro). As ProRS can inadvertently accommodate and process non-cognate amino acids such as alanine and cysteine, to avoid such errors it has two additional distinct editing activities against alanine. One activity is designated as 'pretransfer' editing and involves the tRNA(Pro)-independent hydrolysis of activated Ala-AMP. The other activity is designated 'posttransfer' editing and involves deacylation of mischarged Ala-tRNA(Pro). The misacylated Cys-tRNA(Pro) is not edited by ProRS. The sequence is that of Proline--tRNA ligase from Verminephrobacter eiseniae (strain EF01-2).